A 384-amino-acid chain; its full sequence is Mitogen-activated protein kinase 8 (384 aa).

The Protein kinase domain maps to 26–321 (YQNLKPIGSG…VDEALQHPYI (296 aa)). Residues 32 to 40 (IGSGAQGIV) and Lys-55 contribute to the ATP site. Cys-116 is subject to S-nitrosocysteine. Asp-151 functions as the Proton acceptor in the catalytic mechanism. Thr-183 carries the phosphothreonine; by MAP2K7 modification. Residues 183–185 (TPY) carry the TXY motif. Tyr-185 is subject to Phosphotyrosine; by MAP2K4. Phosphoserine is present on Ser-377.

This sequence belongs to the protein kinase superfamily. CMGC Ser/Thr protein kinase family. MAP kinase subfamily. In terms of assembly, binds to at least four scaffolding proteins, MAPK8IP1/JIP-1, MAPK8IP2/JIP-2, MAPK8IP3/JIP-3/JSAP1 and SPAG9/MAPK8IP4/JIP-4. These proteins also bind other components of the JNK signaling pathway. Forms a complex with MAPK8IP1 and ARHGEF28. Interacts with TP53 and WWOX. Interacts with JAMP. Interacts with NFATC4. Interacts with MECOM; regulates JNK signaling. Interacts with PIN1; this interaction mediates MAPK8 conformational changes leading to the binding of MAPK8 to its substrates. Interacts with HSF1 (via D domain and preferentially with hyperphosphorylated form); this interaction occurs under both normal growth conditions and immediately upon heat shock. Interacts (phosphorylated form) with NFE2; the interaction phosphorylates NFE2 in undifferentiated cells. Interacts with GRIPAP1. Interacts with POU5F1; phosphorylates POU5F1 at 'Ser-347'. Found in a complex with SH3RF1, RAC1, MAP3K11/MLK3, MAP2K7/MKK7 and MAPK8IP1/JIP1. Found in a complex with SH3RF1, RAC2, MAP3K7/TAK1, MAP2K7/MKK7, MAPK8IP1/JIP1 and MAPK9/JNK2. Mg(2+) is required as a cofactor. Post-translationally, phosphorylated by TAOK2. Dually phosphorylated on Thr-183 and Tyr-185 by MAP2K7 and MAP2K4, which activates the enzyme. May be phosphorylated at Thr-183 and Tyr-185 by MAP3K1/MEKK1. Phosphorylated form is more concentrated at synapses than none-phosphorylated. In terms of tissue distribution, brain (at protein level).

It is found in the cytoplasm. Its subcellular location is the nucleus. The protein localises to the synapse. The catalysed reaction is L-seryl-[protein] + ATP = O-phospho-L-seryl-[protein] + ADP + H(+). It catalyses the reaction L-threonyl-[protein] + ATP = O-phospho-L-threonyl-[protein] + ADP + H(+). Inhibited by SERPINB3. Activated by threonine and tyrosine phosphorylation by either of two dual specificity kinases, MAP2K4 and MAP2K7. MAP2K4 shows a strong preference for Tyr-185 while MAP2K7 phosphorylates Tyr-183 preferentially. Inhibited by dual specificity phosphatases, such as DUSP1. Functionally, serine/threonine-protein kinase involved in various processes such as cell proliferation, differentiation, migration, transformation and programmed cell death. Extracellular stimuli such as pro-inflammatory cytokines or physical stress stimulate the stress-activated protein kinase/c-Jun N-terminal kinase (SAP/JNK) signaling pathway. In this cascade, two dual specificity kinases MAP2K4/MKK4 and MAP2K7/MKK7 phosphorylate and activate MAPK8/JNK1. In turn, MAPK8/JNK1 phosphorylates a number of transcription factors, primarily components of AP-1 such as JUN, JDP2 and ATF2 and thus regulates AP-1 transcriptional activity. Phosphorylates the replication licensing factor CDT1, inhibiting the interaction between CDT1 and the histone H4 acetylase HBO1 to replication origins. Loss of this interaction abrogates the acetylation required for replication initiation. Promotes stressed cell apoptosis by phosphorylating key regulatory factors including p53/TP53 and Yes-associates protein YAP1. In T-cells, MAPK8 and MAPK9 are required for polarized differentiation of T-helper cells into Th1 cells. Contributes to the survival of erythroid cells by phosphorylating the antagonist of cell death BAD upon EPO stimulation. Mediates starvation-induced BCL2 phosphorylation, BCL2 dissociation from BECN1, and thus activation of autophagy. Phosphorylates STMN2 and hence regulates microtubule dynamics, controlling neurite elongation in cortical neurons. In the developing brain, through its cytoplasmic activity on STMN2, negatively regulates the rate of exit from multipolar stage and of radial migration from the ventricular zone. Phosphorylates several other substrates including heat shock factor protein 4 (HSF4), the deacetylase SIRT1, ELK1, or the E3 ligase ITCH. Phosphorylates the CLOCK-BMAL1 heterodimer and plays a role in the regulation of the circadian clock. Phosphorylates the heat shock transcription factor HSF1, suppressing HSF1-induced transcriptional activity. Phosphorylates POU5F1, which results in the inhibition of POU5F1's transcriptional activity and enhances its proteasomal degradation. Phosphorylates JUND and this phosphorylation is inhibited in the presence of MEN1. In neurons, phosphorylates SYT4 which captures neuronal dense core vesicles at synapses. Phosphorylates EIF4ENIF1/4-ET in response to oxidative stress, promoting P-body assembly. Phosphorylates SIRT6 in response to oxidative stress, stimulating its mono-ADP-ribosyltransferase activity. Phosphorylates NLRP3, promoting assembly of the NLRP3 inflammasome. Phosphorylates ALKBH5 in response to reactive oxygen species (ROS), promoting ALKBH5 sumoylation and inactivation. In Mus musculus (Mouse), this protein is Mitogen-activated protein kinase 8 (Mapk8).